A 185-amino-acid polypeptide reads, in one-letter code: Ribosome-recycling factor (185 aa).

It belongs to the RRF family.

It localises to the cytoplasm. In terms of biological role, responsible for the release of ribosomes from messenger RNA at the termination of protein biosynthesis. May increase the efficiency of translation by recycling ribosomes from one round of translation to another. The polypeptide is Ribosome-recycling factor (Pectobacterium carotovorum subsp. carotovorum (strain PC1)).